The chain runs to 392 residues: MENRTEMSQLRASKKDSKISHVLLMAIKLYLESGQPVGSKLLKETYCSDLSSATIRNYFAQLETDGFLRKNHISGGRIPTDLAFRYYADHCSPVLEQEEISIIQQKLKELPEYSKNIVKDLQKASEILSEILQLPVCFSSPRFESDSVTNIQLVSIDDLRVVFVLSTEFGQLFTDVLWLPEQLPENSLKRIESFLQNYLRKHPSSVPLSQKEEDLGMTLYNEVVVRYLTRYCHFSEEDLYQTGLSRLLKYEVFKDPETLAQGLSFFENRKHMCQLLNSHLHKKAPTTFIGRELSDIVGNADPSCAVITVPYYMDRTPLGAFGVLGPMNLPYQQVFGTLSLFTERLKTILTQSFYKFKLSFRRPCPTDPRCSQKPAELTRRSSIKLLPAKELT.

This sequence belongs to the HrcA family.

In terms of biological role, negative regulator of class I heat shock genes (grpE-dnaK-dnaJ and groELS operons). Prevents heat-shock induction of these operons. This Chlamydia muridarum (strain MoPn / Nigg) protein is Heat-inducible transcription repressor HrcA.